Reading from the N-terminus, the 1001-residue chain is Serine/threonine-protein kinase TAO1-A (1001 aa).

The 254-residue stretch at 28 to 281 folds into the Protein kinase domain; it reads FSDLREIGHG…SDELLKNMFV (254 aa). Residues 34–42 and Lys-57 each bind ATP; that span reads IGHGSFGAV. Residue Asp-151 is the Proton acceptor of the active site. Disordered regions lie at residues 324-431 and 567-586; these read PAVE…HKSH and KEELNENQSTPKKEKQEWLS. The segment covering 350-370 has biased composition (low complexity); it reads SNQSIPSMSISASSQSSSVTS. 2 stretches are compositionally biased toward basic and acidic residues: residues 375 to 388 and 577 to 586; these read SDDKSELDMMEGDH and PKKEKQEWLS. Coiled-coil stretches lie at residues 458–651 and 754–877; these read SELR…EHAM and KAVL…EIEA. A disordered region spans residues 911 to 1001; the sequence is SHNPTGGPGP…ISNGSRMSYT (91 aa). The span at 921-930 shows a compositional bias: low complexity; the sequence is HWGHPMAGPP. 2 stretches are compositionally biased toward polar residues: residues 949–967 and 974–1001; these read GSVQGVSRGSTMGVRNSPQ and SGGQTEQGMSRSTSVTSQISNGSRMSYT.

Belongs to the protein kinase superfamily. STE Ser/Thr protein kinase family. STE20 subfamily.

It is found in the cytoplasm. It catalyses the reaction L-seryl-[protein] + ATP = O-phospho-L-seryl-[protein] + ADP + H(+). It carries out the reaction L-threonyl-[protein] + ATP = O-phospho-L-threonyl-[protein] + ADP + H(+). In terms of biological role, serine/threonine-protein kinase involved in various processes such as p38/mapk14 stress-activated MAPK cascade, DNA damage response and regulation of cytoskeleton stability. Acts as an activator of the p38/MAPK14 stress-activated MAPK cascade by mediating phosphorylation and subsequent activation of upstream MAP kinase kinases. In response to DNA damage, involved in the G2/M transition DNA damage checkpoint by activating the p38/MAPK14 stress-activated MAPK cascade. The chain is Serine/threonine-protein kinase TAO1-A (taok1-a) from Xenopus laevis (African clawed frog).